We begin with the raw amino-acid sequence, 600 residues long: Netrin-1 (600 aa).

The first 24 residues, Met-1–Gly-24, serve as a signal peptide directing secretion. A Laminin N-terminal domain is found at His-47–Arg-284. 3 N-linked (GlcNAc...) asparagine glycosylation sites follow: Asn-95, Asn-116, and Asn-131. 14 cysteine pairs are disulfide-bonded: Cys-119/Cys-152, Cys-285/Cys-294, Cys-287/Cys-304, Cys-306/Cys-315, Cys-318/Cys-338, Cys-341/Cys-350, Cys-343/Cys-368, Cys-371/Cys-380, Cys-383/Cys-401, Cys-404/Cys-416, Cys-406/Cys-423, Cys-425/Cys-434, Cys-437/Cys-451, and Cys-472/Cys-544. 3 consecutive Laminin EGF-like domains span residues Cys-285 to Ala-340, Cys-341 to Ala-403, and Cys-404 to Lys-453. Asn-417 carries an N-linked (GlcNAc...) asparagine glycan. An NTR domain is found at Cys-472–Leu-600. Residues Arg-530–Asp-532 carry the Cell attachment site motif.

As to quaternary structure, binds to its receptors; DCC, UNC5A, UNC5B, UNC5C and probably UNC5D. Binds to its receptor; DSCAM. Interacts with APP.

The protein localises to the secreted. It is found in the cytoplasm. Netrins control guidance of CNS commissural axons and peripheral motor axons. Its association with either DCC or some UNC5 receptors will lead to axon attraction or repulsion, respectively. Binding to UNC5C might cause dissociation of UNC5C from polymerized TUBB3 in microtubules and thereby lead to increased microtubule dynamics and axon repulsion. Involved in dorsal root ganglion axon projection towards the spinal cord. It also serves as a survival factor via its association with its receptors which prevent the initiation of apoptosis. Involved in colorectal tumorigenesis by regulating apoptosis. This chain is Netrin-1 (NTN1), found in Sus scrofa (Pig).